The chain runs to 608 residues: Isocitrate dehydrogenase kinase/phosphatase (608 aa).

Residues 327–333 (APGIKGL) and Lys-348 contribute to the ATP site. Residue Asp-383 is part of the active site.

This sequence belongs to the AceK family.

It is found in the cytoplasm. The enzyme catalyses L-seryl-[isocitrate dehydrogenase] + ATP = O-phospho-L-seryl-[isocitrate dehydrogenase] + ADP + H(+). Its function is as follows. Bifunctional enzyme which can phosphorylate or dephosphorylate isocitrate dehydrogenase (IDH) on a specific serine residue. This is a regulatory mechanism which enables bacteria to bypass the Krebs cycle via the glyoxylate shunt in response to the source of carbon. When bacteria are grown on glucose, IDH is fully active and unphosphorylated, but when grown on acetate or ethanol, the activity of IDH declines drastically concomitant with its phosphorylation. The polypeptide is Isocitrate dehydrogenase kinase/phosphatase (Burkholderia ambifaria (strain ATCC BAA-244 / DSM 16087 / CCUG 44356 / LMG 19182 / AMMD) (Burkholderia cepacia (strain AMMD))).